The sequence spans 369 residues: N-succinyl-L-Arg/Lys racemase (369 aa).

Substrate is bound by residues tyrosine 26, aspartate 51, 161 to 163 (KMK), and 191 to 193 (DVN). Residues aspartate 191, glutamate 218, and aspartate 243 each coordinate Mg(2+). Residues lysine 267, 295–296 (SM), and 320–322 (ELT) contribute to the substrate site.

This sequence belongs to the mandelate racemase/muconate lactonizing enzyme family. Mg(2+) is required as a cofactor.

Catalyzes efficient racemization of N-succinyl-L-Arg and N-succinyl-L-Lys, suggesting that these are physiological substrates of this enzyme. Has low activity with L-Asp-L-Lys, and even lower activity with L-Leu-L-Arg, L-Leu-L-Lys, N-succinyl-L-His and N-succinyl-L-Met (in vitro). The protein is N-succinyl-L-Arg/Lys racemase of Bacillus cereus (strain ATCC 14579 / DSM 31 / CCUG 7414 / JCM 2152 / NBRC 15305 / NCIMB 9373 / NCTC 2599 / NRRL B-3711).